We begin with the raw amino-acid sequence, 145 residues long: MKALLQRVGAARVEVGGEIVGSIDRGLLVLVGVEPEDGERCAAKMLHKLLNYRVFGDAEGKMNRSLADVQGGLLLVSQFTLAANTRSGLRPSFSSAAPPAQGEAVFEHLVKLARVAHPQVATGRFGADMQVHLVNDGPVTFLLEC.

The Gly-cisPro motif, important for rejection of L-amino acids motif lies at 137 to 138; sequence GP.

This sequence belongs to the DTD family. In terms of assembly, homodimer.

It localises to the cytoplasm. It carries out the reaction glycyl-tRNA(Ala) + H2O = tRNA(Ala) + glycine + H(+). It catalyses the reaction a D-aminoacyl-tRNA + H2O = a tRNA + a D-alpha-amino acid + H(+). In terms of biological role, an aminoacyl-tRNA editing enzyme that deacylates mischarged D-aminoacyl-tRNAs. Also deacylates mischarged glycyl-tRNA(Ala), protecting cells against glycine mischarging by AlaRS. Acts via tRNA-based rather than protein-based catalysis; rejects L-amino acids rather than detecting D-amino acids in the active site. By recycling D-aminoacyl-tRNA to D-amino acids and free tRNA molecules, this enzyme counteracts the toxicity associated with the formation of D-aminoacyl-tRNA entities in vivo and helps enforce protein L-homochirality. This chain is D-aminoacyl-tRNA deacylase, found in Pseudomonas paraeruginosa (strain DSM 24068 / PA7) (Pseudomonas aeruginosa (strain PA7)).